Consider the following 393-residue polypeptide: Sugar efflux transporter B (393 aa).

Transmembrane regions (helical) follow at residues 13-33, 51-71, 82-102, 106-126, 152-172, 174-194, 219-239, 253-273, 283-303, 306-326, 344-364, and 366-386; these read FDLTSTAFLIVAFLTGIAGAL, AMVGFFFTGSAVIGILVSQFL, KSLIVFCCLLGVLACTLFAWN, FVLLFVGVFLSSFGSTANPQM, VSLAWVIGPPLAYALAMGFSF, VMYLSAAVAFIVCGVMVWLFL, LLLFVICTLMWGSNSLYIINM, LAGVMMGTAAGLEIPTMLIAG, FLMRVAAVGGVCFYAGMLMAH, VILLGLQLLNAIFIGILGGIG, LYTNTSRVGWIIAGSVAGIVA, and IWNYHAVFWFAMVMIIATLFC.

It belongs to the major facilitator superfamily. Set transporter family.

It is found in the cell inner membrane. Involved in the efflux of sugars. The physiological role may be the detoxification of non-metabolizable sugar analogs. Can transport lactose and glucose. The polypeptide is Sugar efflux transporter B (setB) (Escherichia coli (strain K12)).